Reading from the N-terminus, the 125-residue chain is Snaclec coagulation factor IX/factor X-binding protein subunit B (125 aa).

The C-type lectin domain maps to 1 to 122 (DCSSGWTAYG…SLFGHFVCKS (122 aa)). Intrachain disulfides connect C2-C13, C30-C120, and C97-C112. Ca(2+)-binding residues include S41 and E47.

The protein belongs to the snaclec family. As to quaternary structure, heterodimer of subunits A and B; disulfide-linked. Expressed by the venom gland.

It localises to the secreted. Functionally, anticoagulant protein which binds to coagulation factor IX (F9) and coagulation factor X (F10) in the presence of calcium. It may bind the gamma-carboxyglutamic acid-domain regions of factors with a 1 to 1 stoichiometry. The dissociation constant (K(d)) are 6.6 nM for factor IX (F9) and 125 nM for factor X (F10). Does not bind carbohydrates. This is Snaclec coagulation factor IX/factor X-binding protein subunit B from Echis carinatus (Saw-scaled viper).